The chain runs to 407 residues: 1-deoxy-D-xylulose 5-phosphate reductoisomerase (407 aa).

Residues Thr25, Gly26, Ser27, Ile28, Asn53, and Asn136 each contribute to the NADPH site. Position 137 (Lys137) interacts with 1-deoxy-D-xylulose 5-phosphate. Glu138 is a binding site for NADPH. Asp162 is a binding site for Mn(2+). 1-deoxy-D-xylulose 5-phosphate is bound by residues Ser163, Glu164, Ser188, and His211. Residue Glu164 participates in Mn(2+) binding. An NADPH-binding site is contributed by Gly217. 1-deoxy-D-xylulose 5-phosphate contacts are provided by Ser224, Asn229, Lys230, and Glu233. Glu233 contributes to the Mn(2+) binding site.

The protein belongs to the DXR family. The cofactor is Mg(2+). It depends on Mn(2+) as a cofactor.

The enzyme catalyses 2-C-methyl-D-erythritol 4-phosphate + NADP(+) = 1-deoxy-D-xylulose 5-phosphate + NADPH + H(+). It participates in isoprenoid biosynthesis; isopentenyl diphosphate biosynthesis via DXP pathway; isopentenyl diphosphate from 1-deoxy-D-xylulose 5-phosphate: step 1/6. Catalyzes the NADPH-dependent rearrangement and reduction of 1-deoxy-D-xylulose-5-phosphate (DXP) to 2-C-methyl-D-erythritol 4-phosphate (MEP). In Bradyrhizobium sp. (strain BTAi1 / ATCC BAA-1182), this protein is 1-deoxy-D-xylulose 5-phosphate reductoisomerase.